The following is a 509-amino-acid chain: Cardiolipin synthase 1 (509 aa).

3 consecutive transmembrane segments (helical) span residues 4-24 (PIVQ…LLNT), 30-50 (YTFV…VIFI), and 59-79 (LAWF…YAIF). PLD phosphodiesterase domains follow at residues 238-265 (VNYR…GDEY) and 422-449 (KDGF…DVRS). Catalysis depends on residues His243, Lys245, Asp250, His427, Lys429, and Asp434.

Belongs to the phospholipase D family. Cardiolipin synthase subfamily.

It is found in the cell membrane. It catalyses the reaction 2 a 1,2-diacyl-sn-glycero-3-phospho-(1'-sn-glycerol) = a cardiolipin + glycerol. Catalyzes the reversible phosphatidyl group transfer from one phosphatidylglycerol molecule to another to form cardiolipin (CL) (diphosphatidylglycerol) and glycerol. This chain is Cardiolipin synthase 1 (cls1), found in Bacillus cereus (strain ATCC 14579 / DSM 31 / CCUG 7414 / JCM 2152 / NBRC 15305 / NCIMB 9373 / NCTC 2599 / NRRL B-3711).